The sequence spans 117 residues: uncharacterized protein (117 aa).

A signal peptide spans 1–24 (MMTEFGSAMTLVTGLVAYGAYVKS). The interval 42–117 (EKENFNYNNN…NNQIKRRLFD (76 aa)) is disordered. Over residues 46–95 (FNYNNNNNNNNNNNNNNSNNNDNNNNNNSNSNNNNNNNNNNNNNNNNNIN) the composition is skewed to low complexity. Residues Asn61 and Asn72 are each glycosylated (N-linked (GlcNAc...) asparagine). Residues 96–110 (DKQINGTNIFDSNNQ) show a composition bias toward polar residues.

It is found in the secreted. This is an uncharacterized protein from Dictyostelium discoideum (Social amoeba).